The chain runs to 375 residues: Xylose transport system permease protein XylH (375 aa).

A run of 10 helical transmembrane segments spans residues 9–29 (LQVYIMLIAIAVIMAFFSVAT), 52–72 (LAIGMVFVIISAEIDLSVGSL), 85–105 (VWWGFPLPVTIIATIALGLIF), 118–138 (VPSFIVTLAGYLAFRGILIGL), 159–179 (LSDIAGVILGGIAVIGFVLWG), 199–219 (DFTKYALFAVIVLGAIYLLND), 220–240 (YRGIPFPVLVLAVLAILGLFL), 271–291 (KLIIFAMNGVLVAIAGLILSA), 319–339 (LAGGVGSVFGVVIGALIIASL), and 348–368 (VPTFWQYIVKGGILLLAVWID).

The protein belongs to the binding-protein-dependent transport system permease family. AraH/RbsC subfamily.

Its subcellular location is the cell inner membrane. Its function is as follows. Part of the binding-protein-dependent transport system for D-xylose. Probably responsible for the translocation of the substrate across the membrane. The polypeptide is Xylose transport system permease protein XylH (xylH) (Haemophilus influenzae (strain ATCC 51907 / DSM 11121 / KW20 / Rd)).